Here is a 77-residue protein sequence, read N- to C-terminus: MNLRLCVQALLLLWLSLTAVCGVPLMLPPDGTGLEEGSMRYLVKPRTSRTGPGAWQGGRRKFRRQRPRLSHKGPMPF.

Positions 1–22 (MNLRLCVQALLLLWLSLTAVCG) are cleaved as a signal peptide. The propeptide occupies 23 to 41 (VPLMLPPDGTGLEEGSMRY). The interval 46–77 (RTSRTGPGAWQGGRRKFRRQRPRLSHKGPMPF) is disordered. Over residues 58–71 (GRRKFRRQRPRLSH) the composition is skewed to basic residues.

Belongs to the apelin family. In terms of processing, several active peptides may be produced by proteolytic processing of the peptide precursor. In terms of tissue distribution, expressed in extraembryonic visceral endoderm and in the primitive streak at 6.5 and 7.5 dpc. Expressed in the anterior visceral yolk sac at 8.25 dpc. Expressed weakly in the embryonic heart at 11.5 dpc. Expressed in the adult heart. Expressed in endothelial cells and cardiomyocytes and weakly expressed in fibroblasts.

The protein localises to the secreted. The protein resides in the extracellular space. Peptide hormone that functions as endogenous ligand for the G-protein-coupled apelin receptor (APLNR/APJ). Functions as a balanced agonist activating both G(i) protein pathway and beta-arrestin pathway of APLNR. Downstream G proteins activation, apelin can inhibit cAMP production and activate key intracellular effectors such as ERKs. On the other hand, APLNR activation induces beta-arrestin recruitment to the membrane leading to desensitization and internalization of the receptor. Apelin also blunts mechanical stretch-induced hypertrophic induction from APLNR. Apelin-36 dissociates more hardly than (pyroglu)apelin-13 from APLNR. Involved in the regulation of cardiac precursor cell movements during gastrulation and heart morphogenesis. Has an inhibitory effect on cytokine production in response to T-cell receptor/CD3 cross-linking; the oral intake of apelin in the colostrum and the milk might therefore modulate immune responses in neonates. Plays a role in early coronary blood vessels formation. Mediates myocardial contractility in an ERK1/2-dependent manner. May also have a role in the central control of body fluid homeostasis by influencing vasopressin release and drinking behavior. In Mus musculus (Mouse), this protein is Apelin.